Reading from the N-terminus, the 289-residue chain is Trimeric intracellular cation channel type B (289 aa).

Topologically, residues 1–18 (MDVFAFFNLNELAFGLSK) are lumenal. A helical transmembrane segment spans residues 19–36 (LPMFPYFDMAHYIISVMS). Residues 37–49 (LREQPGALCVSQR) are Cytoplasmic-facing. A helical membrane pass occupies residues 50-73 (SPLACWFSSMLYCFGGAVLSALML). Over 74–85 (ADAPVAPLSNTT) the chain is Lumenal. A helical membrane pass occupies residues 86–103 (NLLLATLMWYLVFYCPLD). Topologically, residues 104–107 (VVYS) are cytoplasmic. Residues 108–125 (LASLLPLRLVLTAMKEVT) traverse the membrane as a helical segment. 2 residues coordinate a 1,2-diacyl-sn-glycero-3-phospho-(1D-myo-inositol-4,5-bisphosphate): Lys-122 and Arg-126. Residues 126–144 (RTWKVLSGVSQAGSKYSDA) are Lumenal-facing. A helical transmembrane segment spans residues 145–162 (LFVMVAVGWAKGAGGGLI). At 163–183 (SNFEQLVRGVWKPETNELLKM) the chain is on the cytoplasmic side. The helical transmembrane segment at 184–201 (SYPTKVTLLGAVVFSLQQ) threads the bilayer. Residues 202–210 (CRYLPIQTH) lie on the Lumenal side of the membrane. Residues 211–230 (HLTFIYTLFTVTNKTRMMLL) traverse the membrane as a helical segment. At 231–289 (GSSSHPLSSLESFLYKTLFVRPLTDLSAEHTHSKHNGSVPEPTTAQTHTKEAEASKKTN) the chain is on the cytoplasmic side. Positions 260–289 (HTHSKHNGSVPEPTTAQTHTKEAEASKKTN) are disordered. Over residues 278 to 289 (HTKEAEASKKTN) the composition is skewed to basic and acidic residues.

This sequence belongs to the TMEM38 family. In terms of assembly, homotrimer; conformation seems to be controled by binding to diacylglycerol (DAG).

It localises to the endoplasmic reticulum membrane. It carries out the reaction K(+)(in) = K(+)(out). With respect to regulation, channel activity is activated by increased cytosolic Ca(2+) levels and blocked by luminal high Ca(2+) levels. Its function is as follows. Intracellular monovalent cation channel required for maintenance of rapid intracellular calcium release. Acts as a potassium counter-ion channel that functions in synchronization with calcium release from intracellular stores. Activated by increased cytosolic Ca(2+) levels. The polypeptide is Trimeric intracellular cation channel type B (tmem38b) (Danio rerio (Zebrafish)).